The primary structure comprises 216 residues: Glycerol-3-phosphate acyltransferase 3 (216 aa).

Helical transmembrane passes span 6-26, 58-78, 92-112, 125-145, and 158-178; these read LLLVVIVSYILGSIPFGYLVS, LVASLDVIKGASAVAFAGLVI, LLFAQVLAGLAAVAGHIWPVF, FGGMIALCPVAAIFGGEVLII, and ITGVVGAYALLVPLTLISGFP.

Belongs to the PlsY family. As to quaternary structure, probably interacts with PlsX.

It is found in the cell membrane. It catalyses the reaction an acyl phosphate + sn-glycerol 3-phosphate = a 1-acyl-sn-glycero-3-phosphate + phosphate. The protein operates within lipid metabolism; phospholipid metabolism. Its function is as follows. Catalyzes the transfer of an acyl group from acyl-phosphate (acyl-PO(4)) to glycerol-3-phosphate (G3P) to form lysophosphatidic acid (LPA). This enzyme utilizes acyl-phosphate as fatty acyl donor, but not acyl-CoA or acyl-ACP. The protein is Glycerol-3-phosphate acyltransferase 3 of Dehalococcoides mccartyi (strain CBDB1).